An 87-amino-acid chain; its full sequence is Putative regulatory protein BCQ_3657 (87 aa).

The protein belongs to the RemA family.

This is Putative regulatory protein BCQ_3657 from Bacillus cereus (strain Q1).